We begin with the raw amino-acid sequence, 389 residues long: Formate-dependent phosphoribosylglycinamide formyltransferase (389 aa).

Residues Glu15–Leu16 and Glu75 contribute to the N(1)-(5-phospho-beta-D-ribosyl)glycinamide site. Residues Arg107, Lys148, Ser153 to Gln158, Glu188 to Leu191, and Glu196 each bind ATP. Residues Asn112–Leu302 form the ATP-grasp domain. Residues Glu261 and Glu273 each contribute to the Mg(2+) site. Residues Asp280, Lys350, and Arg357–Arg358 each bind N(1)-(5-phospho-beta-D-ribosyl)glycinamide.

This sequence belongs to the PurK/PurT family. Homodimer.

The catalysed reaction is N(1)-(5-phospho-beta-D-ribosyl)glycinamide + formate + ATP = N(2)-formyl-N(1)-(5-phospho-beta-D-ribosyl)glycinamide + ADP + phosphate + H(+). It functions in the pathway purine metabolism; IMP biosynthesis via de novo pathway; N(2)-formyl-N(1)-(5-phospho-D-ribosyl)glycinamide from N(1)-(5-phospho-D-ribosyl)glycinamide (formate route): step 1/1. In terms of biological role, involved in the de novo purine biosynthesis. Catalyzes the transfer of formate to 5-phospho-ribosyl-glycinamide (GAR), producing 5-phospho-ribosyl-N-formylglycinamide (FGAR). Formate is provided by PurU via hydrolysis of 10-formyl-tetrahydrofolate. The protein is Formate-dependent phosphoribosylglycinamide formyltransferase of Synechococcus sp. (strain CC9311).